Here is a 1537-residue protein sequence, read N- to C-terminus: Adhesion G protein-coupled receptor L3 (1537 aa).

A signal peptide spans 1–19; sequence MWPPQLLILTMLLAPVVHG. Topologically, residues 20–943 are extracellular; that stretch reads GKHNERHPAL…VKHSDAVHDL (924 aa). Residues 53 to 80 are disordered; that stretch reads PAAERSTAHRGQGPRGAARGVRGPGAPG. An SUEL-type lectin domain is found at 103-192; sequence SCESYPIELR…KYLEVQYECV (90 aa). Disulfide bonds link C104-C134, C113-C191, C146-C178, C159-C165, and C203-C385. The N-linked (GlcNAc...) asparagine glycan is linked to N161. Residues 202–461 enclose the Olfactomedin-like domain; sequence LCPGLLKGVY…VVKYSLDFGP (260 aa). Positions 317-347 are interaction with FLRT3; it reads YHDTSPYRWGGKSDIDLAVDENGLWVIYATE. Residues D332, N380, A381, and V435 each contribute to the Ca(2+) site. The tract at residues 521–540 is disordered; sequence RSTTASLPGRRNRSTSTPSP. N-linked (GlcNAc...) asparagine glycans are attached at residues N532, N617, N827, N840, N885, and N911. Residues 756 to 935 form the GAIN-B domain; the sequence is DIVRENTDNI…AVLMAHVEVK (180 aa). Disulfide bonds link C886-C917 and C905-C919. A GPS region spans residues 886–935; that stretch reads CSFWSYSKRTMTGYWSTQGCRLLTTNKTHTTCSCNHLTNFAVLMAHVEVK. The segment at 923–939 is stachel; sequence TNFAVLMAHVEVKHSDA. Residues 944–969 form a helical membrane-spanning segment; the sequence is LLDVITWVGILLSLVCLLICIFTFCF. Residues 970 to 975 are Cytoplasmic-facing; it reads FRGLQS. Residues 976-999 form a helical membrane-spanning segment; the sequence is DRNTIHKNLCISLFVAELLFLIGI. N-linked (GlcNAc...) asparagine glycosylation is present at N1000. Residues 1000–1006 are Extracellular-facing; that stretch reads NRTDQPI. A helical membrane pass occupies residues 1007–1034; that stretch reads ACAVFAALLHFFFLAAFTWMFLEGVQLY. A disulfide bridge links C1008 with C1080. Residues 1035–1048 lie on the Cytoplasmic side of the membrane; that stretch reads IMLVEVFESEHSRR. The chain crosses the membrane as a helical span at residues 1049-1071; it reads KYFYLVGYGMPALIVAVSAAVDY. The Extracellular portion of the chain corresponds to 1072 to 1086; that stretch reads RSYGTDKVCWLRLDT. A helical transmembrane segment spans residues 1087–1112; that stretch reads YFIWSFIGPATLIIMLNVIFLGIALY. The Cytoplasmic portion of the chain corresponds to 1113-1142; that stretch reads KMFHHTAILKPESGCLDNINYEDNRPFIKS. A helical transmembrane segment spans residues 1143–1163; it reads WVIGAIALLCLLGLTWAFGLM. Topologically, residues 1164-1168 are extracellular; it reads YINES. N1166 is a glycosylation site (N-linked (GlcNAc...) asparagine). A helical membrane pass occupies residues 1169-1195; it reads TVIMAYLFTIFNSLQGMFIFIFHCVLQ. Residues 1196-1537 lie on the Cytoplasmic side of the membrane; the sequence is KKVRKEYGKC…KGPAHLVTSL (342 aa). The tract at residues 1213 to 1237 is disordered; sequence GKSTESSIGSGKTSGSRTPGRYSTG. S1254 and S1522 each carry phosphoserine. The disordered stretch occupies residues 1512–1537; it reads FIVPPNKDGASPEGTSKGPAHLVTSL. Positions 1532–1537 match the PDZ-binding motif; that stretch reads HLVTSL.

This sequence belongs to the G-protein coupled receptor 2 family. LN-TM7 subfamily. In terms of assembly, heterodimer of 2 chains generated by proteolytic processing; the large extracellular N-terminal fragment and the membrane-bound C-terminal fragment predominantly remain associated and non-covalently linked. Interacts (via olfactomedin-like domain) with FLRT1 (via extracellular domain). Interacts (via olfactomedin-like domain) with FLRT2 (via extracellular domain). Interacts (via olfactomedin-like domain) with FLRT3 (via extracellular domain); the interaction is direct. Interacts (via extracellular domain) with TENM1. Interacts (via extracellular domain) with TENM2. Interacts (via extracellular domain) with TENM3. Identified in a complex with FLRT3 and UNC5B; does not interact with UNC5B by itself. Identified in a complex with FLRT3 and UNC5D; does not interact with UNC5D by itself. As to quaternary structure, interacts (via PDZ-binding motif) with SHANK3. Interacts (via PDZ-binding motif) with DLG4. Post-translationally, autoproteolytically processed at the GPS region of the GAIN-B domain; this cleavage modulates receptor activity. In terms of processing, O-glycosylated (major) and N-glycosylated. In terms of tissue distribution, localizes to postsynaptic spines in non-overlapping dendritic domains of CA1-region pyramidal neurons: specifically localizes to excitatory synapses in the S.oriens and S.radiatum, corresponding to distinct presynaptic inputs onto CA1-region pyramidal neurons.

The protein localises to the cell membrane. It is found in the postsynaptic cell membrane. It localises to the cell projection. The protein resides in the axon. Its subcellular location is the cell junction. With respect to regulation, forms a heterodimer of 2 chains generated by proteolytic processing that remain associated through non-covalent interactions mediated by the GAIN-B domain. In the inactivated receptor, the Stachel sequence (also named stalk) is embedded in the GAIN-B domain, where it adopts a beta-strand conformation. On activation, the Stachel moves into the 7 transmembrane region and adopts a twisted hook-shaped configuration that forms contacts within the receptor, leading to coupling of a G-alpha protein, which activates signaling. The cleaved GAIN-B and N-terminal domains can then dissociate from the rest of the receptor. In terms of biological role, orphan adhesion G-protein coupled receptor (aGPCR), which mediates synapse specificity. Ligand binding causes a conformation change that triggers signaling via guanine nucleotide-binding proteins (G proteins) and modulates the activity of downstream effectors. ADGRL3 is coupled with different classes of G alpha proteins, such as G(12)/G(13), G(s), G(i) or G(q), depending on the context. Coupling to G(12)/G(13) G proteins, which mediates the activation Rho small GTPases is the most efficient. Following G-protein coupled receptor activation, associates with cell adhesion molecules that are expressed at the surface of adjacent cells to direct synapse specificity. Specifically mediates the establishment of Schaffer-collateral synapses formed by CA3-region axons on CA1-region pyramidal neurons in the hippocampus. Localizes to postsynaptic spines in excitatory synapses in the S.oriens and S.radiatum and interacts with presynaptic cell adhesion molecules FLRT3 and TENM2, promoting synapse formation. Plays a role in the development of glutamatergic synapses in the cortex. Important in determining the connectivity rates between the principal neurons in the cortex. Its function is as follows. Orphan adhesion G-protein coupled receptor (aGPCR), which mediates synapse specificity. Ligand binding causes a conformation change that triggers signaling via guanine nucleotide-binding proteins (G proteins) and modulates the activity of downstream effectors, such as adenylate cyclase. Isoform 1 is specifically coupled to G(s) G proteins and mediates activation of adenylate cyclase activity. Following G-protein coupled receptor activation, undergoes liquid-liquid phase transition, associates with (1) cell adhesion molecules that are expressed at the surface of adjacent cells, as well as (2) PDZ-containing proteins, such as SHANK3 and DLG4, in the cytoplasm to direct synapse formation. Functionally, orphan adhesion G-protein coupled receptor (aGPCR). Ligand binding causes a conformation change that triggers signaling via guanine nucleotide-binding proteins (G proteins) and modulates the activity of downstream effectors, such as RhoA pathway. Isoform 7 is coupled to G(12) and/or G(13) G proteins (GNA12 and GNA13, respectively) and mediates the activation Rho small GTPases. The protein is Adhesion G protein-coupled receptor L3 of Mus musculus (Mouse).